The chain runs to 90 residues: Small ribosomal subunit protein bS16 (90 aa).

This sequence belongs to the bacterial ribosomal protein bS16 family.

The polypeptide is Small ribosomal subunit protein bS16 (Lactobacillus delbrueckii subsp. bulgaricus (strain ATCC 11842 / DSM 20081 / BCRC 10696 / JCM 1002 / NBRC 13953 / NCIMB 11778 / NCTC 12712 / WDCM 00102 / Lb 14)).